The chain runs to 101 residues: ATP-dependent Clp protease adapter protein ClpS 2 (101 aa).

Belongs to the ClpS family. Binds to the N-terminal domain of the chaperone ClpA.

Involved in the modulation of the specificity of the ClpAP-mediated ATP-dependent protein degradation. This chain is ATP-dependent Clp protease adapter protein ClpS 2, found in Mesorhizobium japonicum (strain LMG 29417 / CECT 9101 / MAFF 303099) (Mesorhizobium loti (strain MAFF 303099)).